Reading from the N-terminus, the 115-residue chain is Biotrophy-associated secreted protein 1 (115 aa).

The N-terminal stretch at 1–22 (MHVFNFAALFTVLATFTATAAA) is a signal peptide. Residues 24-115 (DQGSNTFDQR…GIRRVENYYP (92 aa)) form a disordered region. Composition is skewed to basic and acidic residues over residues 46-55 (IREEKQENVG) and 91-115 (QQKE…NYYP).

The protein localises to the secreted. Its subcellular location is the host cytoplasm. In terms of biological role, secreted effector involved in biotrophic colonization of plant cells. Induces an early, basal defense response in susceptible rice, including rapid callose deposition and ROS production in leaves and calli. Also promotes sporulation and mycelia growth suggesting a role across the whole process of interaction, from the biotrophic phase to sporulation. This is Biotrophy-associated secreted protein 1 from Pyricularia oryzae (strain 70-15 / ATCC MYA-4617 / FGSC 8958) (Rice blast fungus).